The sequence spans 474 residues: 3-isopropylmalate dehydratase large subunit (474 aa).

3 residues coordinate [4Fe-4S] cluster: cysteine 353, cysteine 413, and cysteine 416.

It belongs to the aconitase/IPM isomerase family. LeuC type 1 subfamily. Heterodimer of LeuC and LeuD. [4Fe-4S] cluster serves as cofactor.

The catalysed reaction is (2R,3S)-3-isopropylmalate = (2S)-2-isopropylmalate. It functions in the pathway amino-acid biosynthesis; L-leucine biosynthesis; L-leucine from 3-methyl-2-oxobutanoate: step 2/4. Functionally, catalyzes the isomerization between 2-isopropylmalate and 3-isopropylmalate, via the formation of 2-isopropylmaleate. This is 3-isopropylmalate dehydratase large subunit from Roseiflexus sp. (strain RS-1).